A 215-amino-acid polypeptide reads, in one-letter code: Probable phosphoglycerate mutase GpmB (215 aa).

Substrate is bound by residues 8-15 (RHGETVWN), 21-22 (QG), Arg-58, 82-85 (ELNM), and 151-152 (GM). His-9 serves as the catalytic Tele-phosphohistidine intermediate. Glu-82 serves as the catalytic Proton donor/acceptor.

It belongs to the phosphoglycerate mutase family. GpmB subfamily.

It catalyses the reaction (2R)-2-phosphoglycerate = (2R)-3-phosphoglycerate. Its pathway is carbohydrate degradation; glycolysis; pyruvate from D-glyceraldehyde 3-phosphate: step 3/5. This is Probable phosphoglycerate mutase GpmB from Yersinia enterocolitica serotype O:8 / biotype 1B (strain NCTC 13174 / 8081).